The sequence spans 212 residues: Imidazole glycerol phosphate synthase subunit HisH (212 aa).

The 210-residue stretch at 3–212 (TVAVIDYGMG…QNFIAWDGRW (210 aa)) folds into the Glutamine amidotransferase type-1 domain. C81 serves as the catalytic Nucleophile. Residues H190 and E192 contribute to the active site.

As to quaternary structure, heterodimer of HisH and HisF.

The protein resides in the cytoplasm. It carries out the reaction 5-[(5-phospho-1-deoxy-D-ribulos-1-ylimino)methylamino]-1-(5-phospho-beta-D-ribosyl)imidazole-4-carboxamide + L-glutamine = D-erythro-1-(imidazol-4-yl)glycerol 3-phosphate + 5-amino-1-(5-phospho-beta-D-ribosyl)imidazole-4-carboxamide + L-glutamate + H(+). It catalyses the reaction L-glutamine + H2O = L-glutamate + NH4(+). Its pathway is amino-acid biosynthesis; L-histidine biosynthesis; L-histidine from 5-phospho-alpha-D-ribose 1-diphosphate: step 5/9. In terms of biological role, IGPS catalyzes the conversion of PRFAR and glutamine to IGP, AICAR and glutamate. The HisH subunit catalyzes the hydrolysis of glutamine to glutamate and ammonia as part of the synthesis of IGP and AICAR. The resulting ammonia molecule is channeled to the active site of HisF. The protein is Imidazole glycerol phosphate synthase subunit HisH of Pseudomonas putida (strain ATCC 47054 / DSM 6125 / CFBP 8728 / NCIMB 11950 / KT2440).